The following is a 122-amino-acid chain: Large ribosomal subunit protein uL24 (122 aa).

This sequence belongs to the universal ribosomal protein uL24 family. In terms of assembly, part of the 50S ribosomal subunit.

Its function is as follows. One of two assembly initiator proteins, it binds directly to the 5'-end of the 23S rRNA, where it nucleates assembly of the 50S subunit. Located at the polypeptide exit tunnel on the outside of the subunit. The protein is Large ribosomal subunit protein uL24 of Methanosarcina mazei (strain ATCC BAA-159 / DSM 3647 / Goe1 / Go1 / JCM 11833 / OCM 88) (Methanosarcina frisia).